A 368-amino-acid polypeptide reads, in one-letter code: Polymerase delta-interacting protein 2 (368 aa).

The transit peptide at 1 to 51 directs the protein to the mitochondrion; the sequence is MAACTARRALAVGSRWWSRSLTGARWPRPLCAAAGAGAFSPASTTTTRRHL. The region spanning 235-360 is the ApaG domain; that stretch reads RETTENIRVT…FSLESNKDEK (126 aa). Thr292 carries the post-translational modification Phosphothreonine.

Interacts with PCNA and POLD2. Interacts with SSBP1. Interacts with PRIMPOL; leading to enhance DNA polymerase activity of PRIMPOL. Interacts with POLH. Interacts with POLD1; leading to stimulate DNA polymerase activity of POLD1.

The protein localises to the mitochondrion matrix. Its subcellular location is the nucleus. Involved in DNA damage tolerance by regulating translesion synthesis (TLS) of templates carrying DNA damage lesions such as 8oxoG and abasic sites. May act by stimulating activity of DNA polymerases involved in TLS, such as PRIMPOL and polymerase delta (POLD1). This Homo sapiens (Human) protein is Polymerase delta-interacting protein 2.